Consider the following 663-residue polypeptide: Beta-galactosidase YesZ (663 aa).

Arg107 is a binding site for substrate. A Zn(2+)-binding site is contributed by Cys111. A substrate-binding site is contributed by Asn145. Glu146 functions as the Proton donor in the catalytic mechanism. Zn(2+) is bound by residues Cys154, Cys156, and Cys159. Glu297 (nucleophile) is an active-site residue. Glu346 to His349 provides a ligand contact to substrate.

The protein belongs to the glycosyl hydrolase 42 family. Homotrimer.

The enzyme catalyses Hydrolysis of terminal non-reducing beta-D-galactose residues in beta-D-galactosides.. Functionally, may play a role in the degradation of rhamnogalacturonan derived from plant cell walls. This is Beta-galactosidase YesZ (yesZ) from Bacillus licheniformis (strain ATCC 14580 / DSM 13 / JCM 2505 / CCUG 7422 / NBRC 12200 / NCIMB 9375 / NCTC 10341 / NRRL NRS-1264 / Gibson 46).